We begin with the raw amino-acid sequence, 1014 residues long: MVHHYSMSCPDLEAIEQVEWEFSRQLSRRRLEQELGSREAAADLSELSEGEKDGKPDTHPPPAAAAAEAAADDGGGGDHQQQQQQPPPHQLSRFARINSDPRIVSDEEEEVTTDRNLYIVLISIHGLVRGENMELGRDSDTGGQVKYVVELARALAATPGVHRVDLLTRQISCPDVDWTYGEPVEMLTVPAADADDEDGGGGSSGGAYIVRLPCGPRDKYLPKESLWPHIPEFVDRALAHVTNVARALGEQLSPPPPSDGAGAAAQAVWPYVIHGHYADAAEVAALLASALNVPMVMTGHSLGRNKLEQLLKLGRMPRAEIQGTYKIARRIEAEETGLDAADMVVTSTKQEIEEQWGLYDGFDLKVERKLRVRRRRGVSCLGRYMPRMVVIPPGMDFSYVDTQDLAADGAGGAGDAADLQLLINPNKAKKPLPPIWSEVLRFFTNPHKPMILALSRPDPKKNVTTLLKAYGESRHLRELANLTLILGNRDDIEEMSGGAATVLTAVLKLIDRYDLYGQVAYPKHHKQTDVPHIYRLAAKTKGVFINPALVEPFGLTIIEAAAYGLPVVATKNGGPVDILKVLSNGLLVDPHDAAAITAALLSLLADKSRWSECRRSGLRNIHRFSWPHHCRLYLSHVAASCDHPAPHQLLRVPPSPSSSSAAAAAAGGGGAAASSEPLSDSLRDLSLRISVDAASPDLSAGDSAAAILDALRRRRSTDRPAASSAARAIGFAPGRRQSLLVVAIDCYGDDGKPNVEQLKKVVELAMSAGDGDDAGGRGYVLSTGMTIPEAVDALRACGADPAGFDALICSSGAEICYPWKGEQLAADEEYAGHVAFRWPGDHVRSAVPRLGKADGAQEADLAVDAAACSVHCHAYAAKDASKVKKVDWIRQALRMRGFRCNLVYTRACTRLNVVPLSASRPRALRYLSIQWGIDLSKVAVLVGEKGDTDRERLLPGLHRTVILPGMVAAGSEELLRDEDGFTTEDVVAMDSPNIVTLADGQDIAAAAADLLKAI.

Basic and acidic residues-rich tracts occupy residues 29-41 and 49-58; these read RRLEQELGSREAA and EGEKDGKPDT. 2 disordered regions span residues 29–108 and 648–677; these read RRLE…SDEE and QLLRVPPSPSSSSAAAAAAGGGGAAASSEP.

The protein belongs to the glycosyltransferase 1 family. In terms of assembly, homodimer or homotetramer. As to expression, expressed in germinating seeds.

The catalysed reaction is beta-D-fructose 6-phosphate + UDP-alpha-D-glucose = sucrose 6(F)-phosphate + UDP + H(+). It functions in the pathway glycan biosynthesis; sucrose biosynthesis; sucrose from D-fructose 6-phosphate and UDP-alpha-D-glucose: step 1/2. With respect to regulation, activity is regulated by phosphorylation and moderated by concentration of metabolites and light. Its function is as follows. Plays a role in photosynthetic sucrose synthesis by catalyzing the rate-limiting step of sucrose biosynthesis from UDP-glucose and fructose- 6-phosphate. Involved in the regulation of carbon partitioning in the leaves of plants. May regulate the synthesis of sucrose and therefore play a major role as a limiting factor in the export of photoassimilates out of the leaf. Plays a role for sucrose availability that is essential for plant growth and fiber elongation. This Oryza sativa subsp. japonica (Rice) protein is Probable sucrose-phosphate synthase 5 (SPS5).